A 353-amino-acid chain; its full sequence is Photosystem II protein D1 (353 aa).

Position 2 is an N-acetylthreonine (T2). T2 carries the phosphothreonine modification. Transmembrane regions (helical) follow at residues 29 to 46 (YIGW…TATA), 118 to 133 (HFLL…EWEL), and 142 to 156 (WIAV…AAAA). H118 contributes to the chlorophyll a binding site. Pheophytin a is bound at residue Y126. Residues D170 and E189 each coordinate [CaMn4O5] cluster. The chain crosses the membrane as a helical span at residues 197-218 (FHMLGVAGVFGGSLFSAMHGSL). Residue H198 participates in chlorophyll a binding. A quinone is bound by residues H215 and 264–265 (SF). H215 contacts Fe cation. H272 serves as a coordination point for Fe cation. Residues 274-288 (FLAAWPVVGIWFTAL) traverse the membrane as a helical segment. Residues H332, E333, D342, and A344 each contribute to the [CaMn4O5] cluster site. Positions 345–353 (SVEAPSVNG) are excised as a propeptide.

This sequence belongs to the reaction center PufL/M/PsbA/D family. PSII is composed of 1 copy each of membrane proteins PsbA, PsbB, PsbC, PsbD, PsbE, PsbF, PsbH, PsbI, PsbJ, PsbK, PsbL, PsbM, PsbT, PsbX, PsbY, PsbZ, Psb30/Ycf12, at least 3 peripheral proteins of the oxygen-evolving complex and a large number of cofactors. It forms dimeric complexes. Requires The D1/D2 heterodimer binds P680, chlorophylls that are the primary electron donor of PSII, and subsequent electron acceptors. It shares a non-heme iron and each subunit binds pheophytin, quinone, additional chlorophylls, carotenoids and lipids. D1 provides most of the ligands for the Mn4-Ca-O5 cluster of the oxygen-evolving complex (OEC). There is also a Cl(-1) ion associated with D1 and D2, which is required for oxygen evolution. The PSII complex binds additional chlorophylls, carotenoids and specific lipids. as cofactor. Post-translationally, tyr-161 forms a radical intermediate that is referred to as redox-active TyrZ, YZ or Y-Z. In terms of processing, C-terminally processed by CTPA; processing is essential to allow assembly of the oxygen-evolving complex and thus photosynthetic growth.

The protein resides in the plastid. Its subcellular location is the chloroplast thylakoid membrane. The enzyme catalyses 2 a plastoquinone + 4 hnu + 2 H2O = 2 a plastoquinol + O2. In terms of biological role, photosystem II (PSII) is a light-driven water:plastoquinone oxidoreductase that uses light energy to abstract electrons from H(2)O, generating O(2) and a proton gradient subsequently used for ATP formation. It consists of a core antenna complex that captures photons, and an electron transfer chain that converts photonic excitation into a charge separation. The D1/D2 (PsbA/PsbD) reaction center heterodimer binds P680, the primary electron donor of PSII as well as several subsequent electron acceptors. The protein is Photosystem II protein D1 of Huperzia lucidula (Shining clubmoss).